The following is a 141-amino-acid chain: MASEKDDGPALPKLDDDNQTAENTCKPAEEQPQQLRWDDIHLPRFSLKQGMIPTRYVMPWKENMKFRNVNLQQAEACGIYAGPLEDSLFWGYSERLCHGEDRKAVLKKGLPEIKITDMPLHSPLSRYQSTVISHGFRRRLI.

Basic and acidic residues predominate over residues 1–16 (MASEKDDGPALPKLDD). Residues 1 to 33 (MASEKDDGPALPKLDDDNQTAENTCKPAEEQPQ) are disordered.

In terms of assembly, microtubule inner protein component of sperm flagellar doublet microtubules. In terms of tissue distribution, expressed predominantly in the testis.

It is found in the cytoplasm. It localises to the cytoskeleton. The protein resides in the flagellum axoneme. In terms of biological role, microtubule inner protein (MIP) part of the dynein-decorated doublet microtubules (DMTs) in flagellum axoneme, which is required for flagellum beating. May serve to reinforce and thus stabilize the microtubule structure in the sperm flagella. Involved in the regulation of sperm motility. This Mus musculus (Mouse) protein is Sperm-associated microtubule inner protein 10 (Spmip10).